The following is a 228-amino-acid chain: Cytochrome c oxidase subunit 2 (228 aa).

Topologically, residues 1–14 (MAYPLQLGLQDASS) are mitochondrial intermembrane. A helical transmembrane segment spans residues 15 to 45 (PIMEELTNFHDHTLMIVFLISSLVLYLISLM). The Mitochondrial matrix portion of the chain corresponds to 46-59 (LTTKLIHTSTMDAQ). The helical transmembrane segment at 60-87 (EVETIWTILPAIILILIALPSLRILYMM) threads the bilayer. Over 88 to 228 (DEINNPVLTV…FENWSVSMTQ (141 aa)) the chain is Mitochondrial intermembrane. His161, Cys196, Glu198, Cys200, His204, and Met207 together coordinate Cu cation. Residue Glu198 coordinates Mg(2+).

Belongs to the cytochrome c oxidase subunit 2 family. Component of the cytochrome c oxidase (complex IV, CIV), a multisubunit enzyme composed of 14 subunits. The complex is composed of a catalytic core of 3 subunits MT-CO1, MT-CO2 and MT-CO3, encoded in the mitochondrial DNA, and 11 supernumerary subunits COX4I, COX5A, COX5B, COX6A, COX6B, COX6C, COX7A, COX7B, COX7C, COX8 and NDUFA4, which are encoded in the nuclear genome. The complex exists as a monomer or a dimer and forms supercomplexes (SCs) in the inner mitochondrial membrane with NADH-ubiquinone oxidoreductase (complex I, CI) and ubiquinol-cytochrome c oxidoreductase (cytochrome b-c1 complex, complex III, CIII), resulting in different assemblies (supercomplex SCI(1)III(2)IV(1) and megacomplex MCI(2)III(2)IV(2)). Found in a complex with TMEM177, COA6, COX18, COX20, SCO1 and SCO2. Interacts with TMEM177 in a COX20-dependent manner. Interacts with COX20. Interacts with COX16. Cu cation serves as cofactor.

Its subcellular location is the mitochondrion inner membrane. The enzyme catalyses 4 Fe(II)-[cytochrome c] + O2 + 8 H(+)(in) = 4 Fe(III)-[cytochrome c] + 2 H2O + 4 H(+)(out). Its function is as follows. Component of the cytochrome c oxidase, the last enzyme in the mitochondrial electron transport chain which drives oxidative phosphorylation. The respiratory chain contains 3 multisubunit complexes succinate dehydrogenase (complex II, CII), ubiquinol-cytochrome c oxidoreductase (cytochrome b-c1 complex, complex III, CIII) and cytochrome c oxidase (complex IV, CIV), that cooperate to transfer electrons derived from NADH and succinate to molecular oxygen, creating an electrochemical gradient over the inner membrane that drives transmembrane transport and the ATP synthase. Cytochrome c oxidase is the component of the respiratory chain that catalyzes the reduction of oxygen to water. Electrons originating from reduced cytochrome c in the intermembrane space (IMS) are transferred via the dinuclear copper A center (CU(A)) of subunit 2 and heme A of subunit 1 to the active site in subunit 1, a binuclear center (BNC) formed by heme A3 and copper B (CU(B)). The BNC reduces molecular oxygen to 2 water molecules using 4 electrons from cytochrome c in the IMS and 4 protons from the mitochondrial matrix. The polypeptide is Cytochrome c oxidase subunit 2 (MT-CO2) (Meriones shawi (Shaw's jird)).